Here is a 182-residue protein sequence, read N- to C-terminus: MMRRSPSGLKSPRVSQGRKPRDPESLLFLRCCLGSEPHNLSSLLSPEAGQEPLPKLLPQPLAGHAAWGIHGVPTSLLLAGECWGQGMAVPADPPPASPYRTSPRPPPGPLPRYRPQQHLLLPLGRLHALCPGCPLQQSLQFERGTLSAPRLWSWMKLETIILSKLSQGQKTKHRMFSLISES.

Disordered regions lie at residues 1–22 (MMRR…KPRD) and 89–108 (VPAD…PPPG). A compositionally biased stretch (pro residues) spans 91 to 108 (ADPPPASPYRTSPRPPPG). One can recognise a DUF1725 domain in the interval 154-167 (WMKLETIILSKLSQ).

The sequence is that of Proline-rich protein, Y-linked (PRORY) from Homo sapiens (Human).